A 586-amino-acid polypeptide reads, in one-letter code: Exopolysaccharide phosphotransferase SCO6023 (586 aa).

This sequence belongs to the stealth family.

The chain is Exopolysaccharide phosphotransferase SCO6023 from Streptomyces coelicolor (strain ATCC BAA-471 / A3(2) / M145).